A 459-amino-acid polypeptide reads, in one-letter code: Glutamyl-tRNA reductase (459 aa).

Substrate contacts are provided by residues 49–52, Ser-109, 114–116, and Gln-120; these read TCNR and ETQ. Cys-50 (nucleophile) is an active-site residue. 189–194 serves as a coordination point for NADP(+); sequence GAGKMG.

This sequence belongs to the glutamyl-tRNA reductase family. As to quaternary structure, homodimer.

The catalysed reaction is (S)-4-amino-5-oxopentanoate + tRNA(Glu) + NADP(+) = L-glutamyl-tRNA(Glu) + NADPH + H(+). It participates in porphyrin-containing compound metabolism; protoporphyrin-IX biosynthesis; 5-aminolevulinate from L-glutamyl-tRNA(Glu): step 1/2. In terms of biological role, catalyzes the NADPH-dependent reduction of glutamyl-tRNA(Glu) to glutamate 1-semialdehyde (GSA). This is Glutamyl-tRNA reductase from Halalkalibacterium halodurans (strain ATCC BAA-125 / DSM 18197 / FERM 7344 / JCM 9153 / C-125) (Bacillus halodurans).